Consider the following 39-residue polypeptide: MQVNPNPNKLPVELNRTSLYLGLLLTFVMGILFSSYFFN.

Residues 18–38 traverse the membrane as a helical segment; it reads SLYLGLLLTFVMGILFSSYFF.

The protein belongs to the PsbL family. As to quaternary structure, PSII is composed of 1 copy each of membrane proteins PsbA, PsbB, PsbC, PsbD, PsbE, PsbF, PsbH, PsbI, PsbJ, PsbK, PsbL, PsbM, PsbT, PsbX, PsbY, Psb30/Ycf12, peripheral proteins PsbO, CyanoQ (PsbQ), PsbU, PsbV and a large number of cofactors. It forms dimeric complexes.

The protein localises to the cellular thylakoid membrane. Its function is as follows. One of the components of the core complex of photosystem II (PSII). PSII is a light-driven water:plastoquinone oxidoreductase that uses light energy to abstract electrons from H(2)O, generating O(2) and a proton gradient subsequently used for ATP formation. It consists of a core antenna complex that captures photons, and an electron transfer chain that converts photonic excitation into a charge separation. This subunit is found at the monomer-monomer interface and is required for correct PSII assembly and/or dimerization. This Prochlorococcus marinus (strain MIT 9211) protein is Photosystem II reaction center protein L.